The chain runs to 167 residues: Probable phospholipid hydroperoxide glutathione peroxidase (167 aa).

The active site involves Cys-41.

The protein belongs to the glutathione peroxidase family.

It is found in the cytoplasm. The catalysed reaction is a hydroperoxy polyunsaturated fatty acid + 2 glutathione = a hydroxy polyunsaturated fatty acid + glutathione disulfide + H2O. In terms of biological role, protects cells and enzymes from oxidative damage, by catalyzing the reduction of hydrogen peroxide, lipid peroxides and organic hydroperoxide, by glutathione. This Citrus sinensis (Sweet orange) protein is Probable phospholipid hydroperoxide glutathione peroxidase (CSA).